A 227-amino-acid chain; its full sequence is Eukaryotic translation initiation factor 4E-1 (227 aa).

The segment at 1–52 (MAEEHETRPPSAGRPPSSGRGRADDADEREEGEIADDDSGHAPPQANPAAPH) is disordered. A compositionally biased stretch (low complexity) spans 9–20 (PPSAGRPPSSGR). Acidic residues predominate over residues 25–37 (DADEREEGEIADD). 2 EIF4G-binding regions span residues 52-55 (HPLE) and 62-98 (FDNPQGKSKQATWGSSIRPIHTFSTVEDFWSLYNNIH). MRNA-binding positions include 70–75 (KQATWG), K102, and 120–121 (WE). Cysteines 125 and 163 form a disulfide. The tract at residues 146 to 155 (HTLLAMIGEQ) is EIF4G-binding. Residues 170–175 (RGKQER) and 215–219 (KKMDK) each bind mRNA.

This sequence belongs to the eukaryotic initiation factor 4E family. In terms of assembly, EIF4F is a multi-subunit complex, the composition of which varies with external and internal environmental conditions. It is composed of at least EIF4A, EIF4E and EIF4G. EIF4E is also known to interact with other partners. In higher plants two isoforms of EIF4F have been identified, named isoform EIF4F and isoform EIF(iso)4F. Isoform EIF4F has subunits p220 and p26, whereas isoform EIF(iso)4F has subunits p82 and p28. In terms of processing, according to the redox status, the Cys-125-Cys-163 disulfide bridge may have a role in regulating protein function by affecting its ability to bind capped mRNA.

Its subcellular location is the nucleus. It is found in the cytoplasm. Component of the protein complex eIF4F, which is involved in the recognition of the mRNA cap, ATP-dependent unwinding of 5'-terminal secondary structure and recruitment of mRNA to the ribosome. Recognizes and binds the 7-methylguanosine-containing mRNA cap during an early step in the initiation of protein synthesis and facilitates ribosome binding by inducing the unwinding of the mRNAs secondary structures. This is Eukaryotic translation initiation factor 4E-1 from Oryza sativa subsp. japonica (Rice).